A 339-amino-acid polypeptide reads, in one-letter code: Phenylalanine--tRNA ligase alpha subunit (339 aa).

E250 contributes to the Mg(2+) binding site.

This sequence belongs to the class-II aminoacyl-tRNA synthetase family. Phe-tRNA synthetase alpha subunit type 1 subfamily. As to quaternary structure, tetramer of two alpha and two beta subunits. Mg(2+) is required as a cofactor.

The protein resides in the cytoplasm. It catalyses the reaction tRNA(Phe) + L-phenylalanine + ATP = L-phenylalanyl-tRNA(Phe) + AMP + diphosphate + H(+). The polypeptide is Phenylalanine--tRNA ligase alpha subunit (Bacteroides thetaiotaomicron (strain ATCC 29148 / DSM 2079 / JCM 5827 / CCUG 10774 / NCTC 10582 / VPI-5482 / E50)).